The chain runs to 367 residues: Chorismate synthase (367 aa).

Position 48 (Arg-48) interacts with NADP(+). FMN-binding positions include 125 to 127 (RSS), Gly-283, 298 to 302 (KPTPS), and Arg-324.

The protein belongs to the chorismate synthase family. As to quaternary structure, homotetramer. It depends on FMNH2 as a cofactor.

The catalysed reaction is 5-O-(1-carboxyvinyl)-3-phosphoshikimate = chorismate + phosphate. It functions in the pathway metabolic intermediate biosynthesis; chorismate biosynthesis; chorismate from D-erythrose 4-phosphate and phosphoenolpyruvate: step 7/7. In terms of biological role, catalyzes the anti-1,4-elimination of the C-3 phosphate and the C-6 proR hydrogen from 5-enolpyruvylshikimate-3-phosphate (EPSP) to yield chorismate, which is the branch point compound that serves as the starting substrate for the three terminal pathways of aromatic amino acid biosynthesis. This reaction introduces a second double bond into the aromatic ring system. The protein is Chorismate synthase of Agathobacter rectalis (strain ATCC 33656 / DSM 3377 / JCM 17463 / KCTC 5835 / VPI 0990) (Eubacterium rectale).